The sequence spans 565 residues: Atlastin-2 (565 aa).

Residues 1 to 458 lie on the Cytoplasmic side of the membrane; the sequence is MVLKKGVKFF…NIFYAARTPA (458 aa). The region spanning 73–318 is the GB1/RHD3-type G domain; that stretch reads DLNIVVVSVA…LVPLLLAPEN (246 aa). GDP is bound by residues Arg-86, Lys-87, Gly-88, Lys-89, Ser-90, Phe-91, Gln-157, Arg-226, and Asp-227. Arg-86, Lys-87, Gly-88, Lys-89, Ser-90, and Phe-91 together coordinate GTP. Mg(2+) is bound at residue Ser-90. Arg-226 and Asp-227 together coordinate GTP. Positions 238-266 form a coiled coil; it reads LEGGKQFLEKRLQVKKNQHEELQNVRKHI. At Lys-252 the chain carries N6-methyllysine. Residues Val-285 and Asn-288 each coordinate GDP. GTP is bound at residue Val-285. Residues 356 to 447 are 3HB (three-helix bundle) domain; that stretch reads MLQATAEANN…YANFIKHNDG (92 aa). Residues 448–456 are linker; it reads KNIFYAART. The chain crosses the membrane as a helical span at residues 459–479; the sequence is TLFAVMFAMYIISGLTGFIGL. At 480–481 the chain is on the lumenal side; the sequence is NS. A helical membrane pass occupies residues 482 to 502; that stretch reads IAVLCNLVMGLALTFLCTWAY. The Cytoplasmic segment spans residues 503 to 565; the sequence is VKYSGEFREI…VSHHARLKTD (63 aa). Residues 529-565 form an autoinhibitory domain region; the sequence is KPLGDNLMEENIRQSVTNSIKAGLTDQVSHHARLKTD.

Belongs to the TRAFAC class dynamin-like GTPase superfamily. GB1/RHD3 GTPase family. GB1 subfamily. As to quaternary structure, monomeric and homodimeric. The homodimer, transiently formed by two molecules on opposing membranes, is the active form mediating ER membrane fusion. Interacts with REEP5 and RTN3; these proteins are involved in endoplasmic reticulum tubular network organization. Interacts with ZFYVE27; both proteins are involved in endoplasmic reticulum tubular network organization.

It localises to the endoplasmic reticulum membrane. It carries out the reaction GTP + H2O = GDP + phosphate + H(+). Atlastin-2 (ATL2) is a membrane-anchored GTPase that mediates the GTP-dependent fusion of endoplasmic reticulum (ER) membranes, maintaining the continuous ER network. It facilitates the formation of three-way junctions where ER tubules intersect. Two atlastin-2 on neighboring ER tubules bind GTP and form loose homodimers through the GB1/RHD3-type G domains and 3HB regions. Upon GTP hydrolysis, the 3HB regions tighten, pulling the membranes together to drive their fusion. After fusion, the homodimer disassembles upon release of inorganic phosphate (Pi). Subsequently, GDP dissociates, resetting the monomers to a conformation ready for a new fusion cycle. This is Atlastin-2 from Macaca fascicularis (Crab-eating macaque).